The primary structure comprises 235 residues: Small ribosomal subunit protein uS3 (235 aa).

In terms of domain architecture, KH type-2 spans 39 to 107 (IREILHKELK…DVVINIVEIR (69 aa)). Residues 215-235 (QDKRMAEGDGGGSSRPRRDAA) form a disordered region.

It belongs to the universal ribosomal protein uS3 family. In terms of assembly, part of the 30S ribosomal subunit. Forms a tight complex with proteins S10 and S14.

Its function is as follows. Binds the lower part of the 30S subunit head. Binds mRNA in the 70S ribosome, positioning it for translation. The polypeptide is Small ribosomal subunit protein uS3 (Rhodopseudomonas palustris (strain ATCC BAA-98 / CGA009)).